We begin with the raw amino-acid sequence, 525 residues long: Zinc finger C2HC domain-containing protein 1C (525 aa).

Residues Ala23–Tyr34 are compositionally biased toward basic and acidic residues. Disordered regions lie at residues Ala23–Leu48, Cys85–Leu107, and Val145–Ser171. A compositionally biased stretch (polar residues) spans Gln36–Leu48. Residues Gly90 to Gly102 are compositionally biased toward low complexity. The stretch at Thr207–Ile252 forms a coiled coil. 3 disordered regions span residues Ser292–Tyr316, Asn330–Ala349, and Leu356–Leu379. A compositionally biased stretch (polar residues) spans Cys301–Gln312. Residues Ser359 to Ser373 show a composition bias toward low complexity. 2 consecutive C2HC/C3H-type zinc fingers follow at residues Glu378–Ser407 and Asp487–Arg516. Cys382, Cys385, His397, Cys401, Cys491, Cys494, His506, and Cys510 together coordinate Zn(2+).

The protein belongs to the ZC2HC1 family. Zn(2+) serves as cofactor.

The sequence is that of Zinc finger C2HC domain-containing protein 1C (Zc2hc1c) from Rattus norvegicus (Rat).